The primary structure comprises 309 residues: Homoserine kinase (309 aa).

Proline 91–cysteine 101 is an ATP binding site.

Belongs to the GHMP kinase family. Homoserine kinase subfamily.

It localises to the cytoplasm. It catalyses the reaction L-homoserine + ATP = O-phospho-L-homoserine + ADP + H(+). It participates in amino-acid biosynthesis; L-threonine biosynthesis; L-threonine from L-aspartate: step 4/5. Catalyzes the ATP-dependent phosphorylation of L-homoserine to L-homoserine phosphate. This chain is Homoserine kinase, found in Klebsiella pneumoniae (strain 342).